The chain runs to 370 residues: Pyruvate dehydrogenase E1 component subunit alpha (370 aa).

As to quaternary structure, heterodimer of an alpha and a beta chain. The cofactor is thiamine diphosphate.

It carries out the reaction N(6)-[(R)-lipoyl]-L-lysyl-[protein] + pyruvate + H(+) = N(6)-[(R)-S(8)-acetyldihydrolipoyl]-L-lysyl-[protein] + CO2. In terms of biological role, the pyruvate dehydrogenase complex catalyzes the overall conversion of pyruvate to acetyl-CoA and CO(2). It contains multiple copies of three enzymatic components: pyruvate dehydrogenase (E1), dihydrolipoamide acetyltransferase (E2) and lipoamide dehydrogenase (E3). This is Pyruvate dehydrogenase E1 component subunit alpha (pdhA) from Staphylococcus aureus (strain MRSA252).